A 1489-amino-acid polypeptide reads, in one-letter code: Ras GTPase-activating-like protein rng2 (1489 aa).

The Calponin-homology (CH) domain occupies 41 to 147 (LCRVDEAKKW…YCIHALSYFL (107 aa)). IQ domains follow at residues 359-388 (QSSS…AYDE), 389-418 (LVNW…QEEA), 418-449 (ATKS…DLFT), 535-564 (ELDN…KLKA), 565-594 (STSS…SFQK), and 655-684 (FIPE…NFHK). Positions 734–770 (EEEVLLEKMRKEIVQQVRDNEEIEVHINELDVKIALL) form a coiled coil. The Ras-GAP domain maps to 870–1110 (VLLLRFISQV…QDTMLMLERL (241 aa)). A coiled-coil region spans residues 1330–1364 (QSLLNLREKRAFLDSQLKSYNEYIEQAMETLQSKK).

In terms of assembly, interacts with calmodulin cam1.

The protein resides in the cytoplasm. Its subcellular location is the cytoskeleton. It is found in the nucleus envelope. The protein localises to the microtubule organizing center. It localises to the spindle pole body. Component of the contractile F-actin ring; required for its construction following assembly of F-actin at the division site. The protein is Ras GTPase-activating-like protein rng2 of Schizosaccharomyces pombe (strain 972 / ATCC 24843) (Fission yeast).